The chain runs to 282 residues: 4-diphosphocytidyl-2-C-methyl-D-erythritol kinase (282 aa).

Residue Lys9 is part of the active site. 98–108 contacts ATP; sequence PMGGGLGGGSS. The active site involves Asp140.

This sequence belongs to the GHMP kinase family. IspE subfamily. Homodimer.

The catalysed reaction is 4-CDP-2-C-methyl-D-erythritol + ATP = 4-CDP-2-C-methyl-D-erythritol 2-phosphate + ADP + H(+). It participates in isoprenoid biosynthesis; isopentenyl diphosphate biosynthesis via DXP pathway; isopentenyl diphosphate from 1-deoxy-D-xylulose 5-phosphate: step 3/6. Catalyzes the phosphorylation of the position 2 hydroxy group of 4-diphosphocytidyl-2C-methyl-D-erythritol. In Klebsiella pneumoniae (strain 342), this protein is 4-diphosphocytidyl-2-C-methyl-D-erythritol kinase.